A 241-amino-acid polypeptide reads, in one-letter code: 3-dehydroquinate dehydratase (241 aa).

Residues glutamate 35–arginine 37 and arginine 70 each bind 3-dehydroquinate. Catalysis depends on histidine 132, which acts as the Proton donor/acceptor. Catalysis depends on lysine 159, which acts as the Schiff-base intermediate with substrate. The 3-dehydroquinate site is built by arginine 201 and glutamine 224.

The protein belongs to the type-I 3-dehydroquinase family. In terms of assembly, homodimer.

The catalysed reaction is 3-dehydroquinate = 3-dehydroshikimate + H2O. It functions in the pathway metabolic intermediate biosynthesis; chorismate biosynthesis; chorismate from D-erythrose 4-phosphate and phosphoenolpyruvate: step 3/7. Functionally, involved in the third step of the chorismate pathway, which leads to the biosynthesis of aromatic amino acids. Catalyzes the cis-dehydration of 3-dehydroquinate (DHQ) and introduces the first double bond of the aromatic ring to yield 3-dehydroshikimate. The polypeptide is 3-dehydroquinate dehydratase (Staphylococcus carnosus (strain TM300)).